We begin with the raw amino-acid sequence, 172 residues long: Adenine phosphoribosyltransferase (172 aa).

This sequence belongs to the purine/pyrimidine phosphoribosyltransferase family. In terms of assembly, homodimer.

It is found in the cytoplasm. It catalyses the reaction AMP + diphosphate = 5-phospho-alpha-D-ribose 1-diphosphate + adenine. It participates in purine metabolism; AMP biosynthesis via salvage pathway; AMP from adenine: step 1/1. In terms of biological role, catalyzes a salvage reaction resulting in the formation of AMP, that is energically less costly than de novo synthesis. This Prochlorococcus marinus (strain SARG / CCMP1375 / SS120) protein is Adenine phosphoribosyltransferase.